Here is a 1185-residue protein sequence, read N- to C-terminus: ELMO domain-containing protein F (1185 aa).

Disordered regions lie at residues 88 to 133 (QPSP…GNNN), 176 to 196 (ISTNPNNNSNNNNNNNNNTAE), 361 to 409 (NNNS…VENE), 566 to 628 (KSTD…NTKS), 642 to 805 (ETER…KSSG), 819 to 868 (LGEK…PYII), 883 to 989 (DLDF…TQVT), and 1044 to 1114 (QKQK…KPVL). Low complexity-rich tracts occupy residues 94–127 (STIHNNSSTSINQSSSPSSSSSTTPSSSTQSSPI), 176–194 (ISTNPNNNSNNNNNNNNNT), 361–406 (NNNS…NNNV), and 587–613 (PQSQQQSQQQTQQTQQPASPLQTSSSS). Residues 275–488 (DRQNVLSFLN…KTRAVLSRIK (214 aa)) form the ELMO domain. A compositionally biased stretch (polar residues) spans 648–665 (SLTGSNGITDGGDSNPNS). Residues 688–699 (SENGSSSSFSFE) are compositionally biased toward low complexity. Over residues 721 to 732 (FNSLTGELTMNI) the composition is skewed to polar residues. Low complexity-rich tracts occupy residues 733–760 (SSSSSLEGNQQQQQQQSTNSSTTSPNVS) and 767–780 (TTTTTNTTTATTTT). The segment covering 781-790 (DDQSQQQVPP) has biased composition (polar residues). Residues 829–841 (KVKSKKEKKKKSK) show a composition bias toward basic residues. 4 stretches are compositionally biased toward low complexity: residues 853 to 864 (NNSANNSSYNNS), 912 to 974 (SSSN…QQPQ), 1053 to 1072 (DENQNQNNNNNKLSDNSSNE), and 1096 to 1109 (GRNSTLNSGSSSLS).

This is ELMO domain-containing protein F (elmoF) from Dictyostelium discoideum (Social amoeba).